A 40-amino-acid polypeptide reads, in one-letter code: MADTTGRIPLWLIGTVTGIPVIGLVGVFFYGSYSGLGSSL.

A helical membrane pass occupies residues 8 to 28 (IPLWLIGTVTGIPVIGLVGVF).

This sequence belongs to the PsbJ family. In terms of assembly, PSII is composed of 1 copy each of membrane proteins PsbA, PsbB, PsbC, PsbD, PsbE, PsbF, PsbH, PsbI, PsbJ, PsbK, PsbL, PsbM, PsbT, PsbX, PsbY, PsbZ, Psb30/Ycf12, at least 3 peripheral proteins of the oxygen-evolving complex and a large number of cofactors. It forms dimeric complexes.

The protein localises to the plastid. It is found in the chloroplast thylakoid membrane. In terms of biological role, one of the components of the core complex of photosystem II (PSII). PSII is a light-driven water:plastoquinone oxidoreductase that uses light energy to abstract electrons from H(2)O, generating O(2) and a proton gradient subsequently used for ATP formation. It consists of a core antenna complex that captures photons, and an electron transfer chain that converts photonic excitation into a charge separation. This chain is Photosystem II reaction center protein J, found in Lolium perenne (Perennial ryegrass).